A 253-amino-acid chain; its full sequence is MHRTSIVEELERHQQDQKADQEPGSVSDASNSALQESSDPRLSTTDNTNTPEINVNDQQQEQQVASGEDTDPPSPRMKTIVKPPPIKVVPPLNFGPVERNLYRSGQPEPISFPFLEKLRLRTILWLAVEDPSDNFLAFADDHEIVVHHLGLVTEGTNPWDQLTESSIVAALQIIMDRDSYPLLVCCGMGRHRTGTIVGCLRRLQGWNLASVSEEYRRYAGSRGGRALIELHIEAFDTSRIIVYPESAPEWCSS.

Positions M1 to Q21 are enriched in basic and acidic residues. Residues M1 to P84 form a disordered region. Residues S27–A65 show a composition bias toward polar residues. The Tyrosine-protein phosphatase domain maps to N93–E249. C186 (phosphocysteine intermediate) is an active-site residue.

Belongs to the protein-tyrosine phosphatase family.

It is found in the cytoplasm. The enzyme catalyses O-phospho-L-tyrosyl-[protein] + H2O = L-tyrosyl-[protein] + phosphate. Its function is as follows. Putative tyrosine-protein phosphatase required for protection against superoxide stress. This Yarrowia lipolytica (strain CLIB 122 / E 150) (Yeast) protein is Putative tyrosine-protein phosphatase OCA1 (OCA1).